The following is an 822-amino-acid chain: Fibroblast growth factor receptor 1 (822 aa).

The first 21 residues, 1–21 (MWSWKCLLFWAVLVTATLCTA), serve as a signal peptide directing secretion. Topologically, residues 22 to 376 (RPSPTLPEQA…AVMTSPLYLE (355 aa)) are extracellular. An Ig-like C2-type 1 domain is found at 25-119 (PTLPEQAQPW…DTTYFSVNVS (95 aa)). C55 and C101 are oxidised to a cystine. N77 and N117 each carry an N-linked (GlcNAc...) asparagine glycan. The segment at 120–154 (DALPSSEDDDDDDDSSSEEKETDNTKPNRMPVAPY) is disordered. Positions 125–135 (SEDDDDDDDSS) are enriched in acidic residues. The span at 136-145 (SEEKETDNTK) shows a compositional bias: basic and acidic residues. Ig-like C2-type domains are found at residues 158–246 (PEKM…YQLD) and 255–357 (PILQ…AWLT). Residues 160-177 (KMEKKLHAVPAAKTVKFK) are heparin-binding. A disulfide bond links C178 and C230. N-linked (GlcNAc...) asparagine glycans are attached at residues N227, N240, N264, N296, N317, and N330. Cysteines 277 and 341 form a disulfide. Residues 377–397 (IIIYCTGAFLISCMVGSVIVY) form a helical membrane-spanning segment. The Cytoplasmic portion of the chain corresponds to 398–822 (KMKSGTKKSD…QLANGGLKRR (425 aa)). Y463 carries the phosphotyrosine; by autocatalysis modification. In terms of domain architecture, Protein kinase spans 478 to 767 (LVLGKPLGEG…VALTSNQEYL (290 aa)). ATP contacts are provided by residues 484–490 (LGEGCFG), K514, 562–564 (EYA), and N568. Phosphotyrosine; by autocatalysis occurs at positions 583 and 585. Catalysis depends on D623, which acts as the Proton acceptor. ATP contacts are provided by R627 and D641. A phosphotyrosine; by autocatalysis mark is found at Y653, Y654, Y730, and Y766. Residues 778-792 (PSFPDTRSSTCSSGE) show a composition bias toward polar residues. Residues 778-822 (PSFPDTRSSTCSSGEDSVFSHEPLPEEPCLPRHPAQLANGGLKRR) form a disordered region.

The protein belongs to the protein kinase superfamily. Tyr protein kinase family. Fibroblast growth factor receptor subfamily. Monomer. Homodimer after ligand binding. Interacts predominantly with FGF1 and FGF2, but can also interact with FGF3, FGF4, FGF5, FGF6, FGF8, FGF10, FGF19, FGF21, FGF22 and FGF23 (in vitro). Ligand specificity is determined by tissue-specific expression of isoforms, and differences in the third Ig-like domain are crucial for ligand specificity. Affinity for fibroblast growth factors (FGFs) is increased by heparan sulfate glycosaminoglycans that function as coreceptors. Likewise, KLB increases the affinity for FGF19, FGF21 and FGF23. Interacts (phosphorylated on Tyr-766) with PLCG1 (via SH2 domains). Interacts with FRS2. Interacts with RPS6KA1. Interacts (via C-terminus) with NEDD4 (via WW3 domain). Interacts with KL. Interacts with SHB (via SH2 domain). Interacts with GRB10. Interacts with ANOS1; this interaction does not interfere with FGF2-binding to FGFR1, but prevents binding of heparin-bound FGF2. Interacts with SOX2 and SOX3. Interacts with FLRT1, FLRT2 and FLRT3. Found in a ternary complex with FGF1 and ITGAV:ITGB3. In terms of processing, autophosphorylated. Binding of FGF family members together with heparan sulfate proteoglycan or heparin promotes receptor dimerization and autophosphorylation on tyrosine residues. Autophosphorylation occurs in trans between the two FGFR molecules present in the dimer and proceeds in a highly ordered manner. Initial autophosphorylation at Tyr-653 increases the kinase activity by a factor of 50 to 100. After this, Tyr-583 becomes phosphorylated, followed by phosphorylation of Tyr-463, Tyr-766, Tyr-583 and Tyr-585. In a third stage, Tyr-654 is autophosphorylated, resulting in a further tenfold increase of kinase activity. Phosphotyrosine residues provide docking sites for interacting proteins and so are crucial for FGFR1 function and its regulation. Post-translationally, ubiquitinated. FGFR1 is rapidly ubiquitinated by NEDD4 after autophosphorylation, leading to internalization and lysosomal degradation. CBL is recruited to activated FGFR1 via FRS2 and GRB2, and mediates ubiquitination and subsequent degradation of FGFR1. N-glycosylated in the endoplasmic reticulum. The N-glycan chains undergo further maturation to an Endo H-resistant form in the Golgi apparatus. As to expression, detected in astrocytoma, neuroblastoma and adrenal cortex cell lines. Some isoforms are detected in foreskin fibroblast cell lines, however isoform 17, isoform 18 and isoform 19 are not detected in these cells.

The protein resides in the cell membrane. The protein localises to the nucleus. Its subcellular location is the cytoplasm. It localises to the cytosol. It is found in the cytoplasmic vesicle. The catalysed reaction is L-tyrosyl-[protein] + ATP = O-phospho-L-tyrosyl-[protein] + ADP + H(+). Its activity is regulated as follows. Present in an inactive conformation in the absence of bound ligand. Ligand binding leads to dimerization and activation by sequential autophosphorylation on tyrosine residues. Inhibited by ARQ 069; this compound maintains the kinase in an inactive conformation and inhibits autophosphorylation. Inhibited by PD173074. In terms of biological role, tyrosine-protein kinase that acts as a cell-surface receptor for fibroblast growth factors and plays an essential role in the regulation of embryonic development, cell proliferation, differentiation and migration. Required for normal mesoderm patterning and correct axial organization during embryonic development, normal skeletogenesis and normal development of the gonadotropin-releasing hormone (GnRH) neuronal system. Phosphorylates PLCG1, FRS2, GAB1 and SHB. Ligand binding leads to the activation of several signaling cascades. Activation of PLCG1 leads to the production of the cellular signaling molecules diacylglycerol and inositol 1,4,5-trisphosphate. Phosphorylation of FRS2 triggers recruitment of GRB2, GAB1, PIK3R1 and SOS1, and mediates activation of RAS, MAPK1/ERK2, MAPK3/ERK1 and the MAP kinase signaling pathway, as well as of the AKT1 signaling pathway. Promotes phosphorylation of SHC1, STAT1 and PTPN11/SHP2. In the nucleus, enhances RPS6KA1 and CREB1 activity and contributes to the regulation of transcription. FGFR1 signaling is down-regulated by IL17RD/SEF, and by FGFR1 ubiquitination, internalization and degradation. The sequence is that of Fibroblast growth factor receptor 1 (FGFR1) from Homo sapiens (Human).